Consider the following 274-residue polypeptide: Large ribosomal subunit protein uL2 (274 aa).

Disordered regions lie at residues 28 to 54 and 223 to 265; these read APYA…TRHI and VAMN…KRTD. Low complexity predominate over residues 39-48; it reads KSGGRNNNGR.

This sequence belongs to the universal ribosomal protein uL2 family. Part of the 50S ribosomal subunit. Forms a bridge to the 30S subunit in the 70S ribosome.

Functionally, one of the primary rRNA binding proteins. Required for association of the 30S and 50S subunits to form the 70S ribosome, for tRNA binding and peptide bond formation. It has been suggested to have peptidyltransferase activity; this is somewhat controversial. Makes several contacts with the 16S rRNA in the 70S ribosome. The sequence is that of Large ribosomal subunit protein uL2 from Alteromonas mediterranea (strain DSM 17117 / CIP 110805 / LMG 28347 / Deep ecotype).